A 169-amino-acid polypeptide reads, in one-letter code: Ureidoglycolate lyase (169 aa).

It belongs to the ureidoglycolate lyase family. As to quaternary structure, homodimer. Ni(2+) is required as a cofactor.

It catalyses the reaction (S)-ureidoglycolate = urea + glyoxylate. It participates in nitrogen metabolism; (S)-allantoin degradation. Functionally, catalyzes the catabolism of the allantoin degradation intermediate (S)-ureidoglycolate, generating urea and glyoxylate. Involved in the utilization of allantoin as nitrogen source. In Brucella abortus biovar 1 (strain 9-941), this protein is Ureidoglycolate lyase.